We begin with the raw amino-acid sequence, 248 residues long: Glycoprotein BILF2 (248 aa).

An N-terminal signal peptide occupies residues 1–17; that stretch reads MTHLVLLLCCCVGSVCA. The Ig-like domain maps to 19–125; the sequence is FSDLVKFENV…NVTLRNCSVA (107 aa). Asn27, Asn37, Asn45, Asn73, Asn83, Asn92, Asn95, Asn104, Asn116, Asn121, Asn131, and Asn144 each carry an N-linked (GlcNAc...) asparagine; by host glycan. Cys40 and Cys115 are oxidised to a cystine. The disordered stretch occupies residues 167–191; that stretch reads VSHTTSTSHRPHRRPVSKRPTHKPV. Residues 175 to 188 show a composition bias toward basic residues; the sequence is HRPHRRPVSKRPTH. Residues 210-230 traverse the membrane as a helical segment; the sequence is WALLLITCAVVAPVLLIIIIS.

The protein belongs to the Epstein-Barr virus BILF2 protein family.

The protein localises to the membrane. The sequence is that of Glycoprotein BILF2 from Epstein-Barr virus (strain B95-8) (HHV-4).